We begin with the raw amino-acid sequence, 363 residues long: L-arabinitol 4-dehydrogenase (363 aa).

Zn(2+)-binding residues include C53, H78, E79, C108, C111, C114, C122, and E163. NAD(+) contacts are provided by residues 190 to 191 (PI), D211, R216, I282, and 306 to 308 (QYR).

The protein belongs to the zinc-containing alcohol dehydrogenase family. Homotetramer. Zn(2+) is required as a cofactor.

The catalysed reaction is L-arabinitol + NAD(+) = L-xylulose + NADH + H(+). Its pathway is carbohydrate degradation; L-arabinose degradation via L-arabinitol; D-xylulose 5-phosphate from L-arabinose (fungal route): step 2/5. Functionally, catalyzes the NAD-dependent oxidation of L-arabinitol to L-xylulose in the fungal L-arabinose catabolic pathway. L-arabinose catabolism is important for using plant material as a carbon source. Not active on D-arabinitol, D-sorbitol and D-mannitol. The protein is L-arabinitol 4-dehydrogenase (ard-1) of Neurospora crassa (strain ATCC 24698 / 74-OR23-1A / CBS 708.71 / DSM 1257 / FGSC 987).